The sequence spans 329 residues: Protein-arginine N-acetylglucosaminyltransferase NleB1 (329 aa).

Arg13 carries N-beta-linked (GlcNAc) arginine; by autocatalysis glycosylation. Residue 48 to 50 (QWF) participates in UDP-N-acetyl-alpha-D-glucosamine binding. Residue Arg53 is glycosylated (N-beta-linked (GlcNAc) arginine; by autocatalysis). Tyr72 contacts UDP-N-acetyl-alpha-D-glucosamine. An N-beta-linked (GlcNAc) arginine; by autocatalysis glycan is attached at Arg159. 219-222 (YLDA) is a binding site for UDP-N-acetyl-alpha-D-glucosamine. A DXD motif motif is present at residues 221–223 (DAD). Asp223 lines the Mn(2+) pocket. The active-site Proton acceptor is Glu253. N-beta-linked (GlcNAc) arginine; by autocatalysis glycosylation is present at Arg293. Residues Asn320 and Ser322 each coordinate Mn(2+). UDP-N-acetyl-alpha-D-glucosamine-binding positions include Ser322 and 327–329 (SSW).

The protein belongs to the glycosyltransferase NleB family. Mn(2+) is required as a cofactor. Post-translationally, auto-glycosylated: arginine GlcNAcylation is required for activity toward death domain-containing host target proteins.

Its subcellular location is the secreted. The protein localises to the host cytoplasm. The enzyme catalyses L-arginyl-[protein] + UDP-N-acetyl-alpha-D-glucosamine = N(omega)-(N-acetyl-beta-D-glucosaminyl)-L-arginyl-[protein] + UDP + H(+). Its function is as follows. Protein-arginine N-acetylglucosaminyltransferase effector that disrupts TNF signaling in infected cells, including NF-kappa-B signaling, apoptosis and necroptosis. Acts by catalyzing the transfer of a single N-acetylglucosamine (GlcNAc) to a conserved arginine residue in the death domain of host proteins FADD, TRADD, FAS, TNFRSF1A/TNFR1, TNFRSF25/DR3 and RIPK1: arginine GlcNAcylation prevents homotypic/heterotypic death domain interactions and assembly of the oligomeric TNF-alpha receptor complex, thereby disrupting TNF signaling. Has preference for host FADD as substrate compared to other death domain-containing proteins. Also acts on host proteins without a death domain: catalyzes arginine GlcNAcylation of HIF1A, thereby regulating host glucose metabolism. Also displays intra-bacterial activity by mediating GlcNAcylation of glutathione synthetase GshB. Catalyzes auto-GlcNAcylation, which is required for activity toward death domain-containing host target proteins. Shows a higher enzymatic activity than NleB2. This is Protein-arginine N-acetylglucosaminyltransferase NleB1 from Escherichia coli O127:H6 (strain E2348/69 / EPEC).